Consider the following 415-residue polypeptide: Glucose-6-phosphate isomerase (415 aa).

The active-site Proton donor is E267. Catalysis depends on residues H293 and K406.

The protein belongs to the GPI family.

It is found in the cytoplasm. The enzyme catalyses alpha-D-glucose 6-phosphate = beta-D-fructose 6-phosphate. Its pathway is carbohydrate biosynthesis; gluconeogenesis. It functions in the pathway carbohydrate degradation; glycolysis; D-glyceraldehyde 3-phosphate and glycerone phosphate from D-glucose: step 2/4. Its function is as follows. Catalyzes the reversible isomerization of glucose-6-phosphate to fructose-6-phosphate. The chain is Glucose-6-phosphate isomerase from Thermus thermophilus (strain ATCC 27634 / DSM 579 / HB8).